The sequence spans 247 residues: Phosphoribosylaminoimidazole-succinocarboxamide synthase (247 aa).

The protein belongs to the SAICAR synthetase family.

It catalyses the reaction 5-amino-1-(5-phospho-D-ribosyl)imidazole-4-carboxylate + L-aspartate + ATP = (2S)-2-[5-amino-1-(5-phospho-beta-D-ribosyl)imidazole-4-carboxamido]succinate + ADP + phosphate + 2 H(+). It functions in the pathway purine metabolism; IMP biosynthesis via de novo pathway; 5-amino-1-(5-phospho-D-ribosyl)imidazole-4-carboxamide from 5-amino-1-(5-phospho-D-ribosyl)imidazole-4-carboxylate: step 1/2. The protein is Phosphoribosylaminoimidazole-succinocarboxamide synthase of Methanopyrus kandleri (strain AV19 / DSM 6324 / JCM 9639 / NBRC 100938).